Here is a 537-residue protein sequence, read N- to C-terminus: Caspase recruitment domain-containing protein 8 (537 aa).

Basic and acidic residues predominate over residues M1 to G23. 2 disordered regions span residues M1–I28 and G113–I133. Residues F161 to F296 form a ZU5 region. The FIIND domain maps to F161–P446. The segment at S297–P446 is UPA. Residues P446 to N536 enclose the CARD domain.

As to quaternary structure, interacts with DPP9; leading to inhibit activation of the inflammasome. DPP9 acts via formation of a ternary complex, composed of a DPP9 homodimer, one full-length CARD8 protein, and one cleaved C-terminus of CARD8 (Caspase recruitment domain-containing protein 8, C-terminus). Interacts with DPP8; leading to inhibit activation of the inflammasome, probably via formation of a ternary complex with DPP8. Interacts with NLRP3. Interacts with IKBKG/NEMO. Interacts with DRAL. Binds to caspase-1 (CASP1), CARD16/pseudo-ICE and CARD18/ICEBERG. Interacts with NLRP2 (via NACHT domain). In terms of assembly, interacts with the C-terminal part of CARD8 (Caspase recruitment domain-containing protein 8, C-terminus) in absence of pathogens and other damage-associated signals. Interacts with the N-terminal part of CARD8 (Caspase recruitment domain-containing protein 8, N-terminus) in absence of pathogens and other damage-associated signals. Homomultimer; forms the CARD8 inflammasome polymeric complex, a filament composed of homopolymers of this form in response to pathogens and other damage-associated signals. The CARD8 inflammasome polymeric complex directly recruits pro-caspase-1 (proCASP1) independently of PYCARD/ASC. Interacts (via CARD domain) with CASP1 (via CARD domain); leading to CASP1 activation. In terms of processing, undergoes autocatalytic processing within the FIIND domain to generate the N-terminal and C-terminal parts, which are associated non-covalently in absence of pathogens and other damage-associated signals. Ubiquitinated by the N-end rule pathway in response to pathogens and other damage-associated signals, leading to its degradation by the proteasome and subsequent release of the cleaved C-terminal part of the protein (Caspase recruitment domain-containing protein 8, C-terminus), which polymerizes and forms the CARD8 inflammasome. Post-translationally, (Microbial infection) Proteolytic cleavage by HIV-1 protease in the disordered region and within the ZU5 region of the FIIND domain promotes ubiquitination of the N-terminal part by the N-end rule pathway and degradation by the proteasome, releasing the cleaved C-terminal part of the protein (Caspase recruitment domain-containing protein 8, C-terminus), which polymerizes and forms the CARD8 inflammasome. In terms of processing, undergoes less autocatalytic processing within the FIIND domain compared to isoform 5. High expression in lung, ovary, testis and placenta. Lower expression in heart, kidney and liver. Also expressed in spleen, lymph node and bone marrow.

It localises to the cytoplasm. The protein resides in the nucleus. The protein localises to the inflammasome. With respect to regulation, CARD8 inflammasome is activated by HIV-1 protease activity: HIV-1 protease cleaves CARD8, promoting ubiquitination and degradation of the N-terminal part, releasing the cleaved C-terminal part of the protein (Caspase recruitment domain-containing protein 8, C-terminus), which polymerizes and forms the CARD8 inflammasome. CARD8 inflammasome is inhibited by DPP8 and DPP9, which sequester the C-terminal fragment of CARD8 (Caspase recruitment domain-containing protein 8, C-terminus) in a ternary complex, thereby preventing CARD8 oligomerization and activation. CARD8 inflammasome is activated by Val-boroPro (Talabostat, PT-100), an inhibitor of dipeptidyl peptidases DPP8 and DPP9. Val-boroPro relieves inhibition of DPP8 and/or DPP9 by inducing the proteasome-mediated destruction of the N-terminal part of CARD8, releasing its C-terminal part from autoinhibition. Indirectly activated by the pseudodipeptide CQ31. CQ31 directly inactivates the peptidases PEPD and XPNPEP1, leading to an accumulation of dipeptides that weaky inhibit DDP8 and DPP9, relieving DPP8- and/or DPP9-mediated inhibition of CARD8. Functionally, inflammasome sensor, which mediates inflammasome activation in response to various pathogen-associated signals, leading to subsequent pyroptosis of CD4(+) T-cells and macrophages. Inflammasomes are supramolecular complexes that assemble in the cytosol in response to pathogens and other damage-associated signals and play critical roles in innate immunity and inflammation. Acts as a recognition receptor (PRR): recognizes specific pathogens and other damage-associated signals, such as HIV-1 protease activity or Val-boroPro inhibitor, and mediates CARD8 inflammasome activation. In response to pathogen-associated signals, the N-terminal part of CARD8 is degraded by the proteasome, releasing the cleaved C-terminal part of the protein (Caspase recruitment domain-containing protein 8, C-terminus), which polymerizes to initiate the formation of the inflammasome complex: the CARD8 inflammasome directly recruits pro-caspase-1 (proCASP1) independently of PYCARD/ASC and promotes caspase-1 (CASP1) activation, which subsequently cleaves and activates inflammatory cytokines IL1B and IL18 and gasdermin-D (GSDMD), leading to pyroptosis. Ability to sense HIV-1 protease activity leads to the clearance of latent HIV-1 in patient CD4(+) T-cells after viral reactivation; in contrast, HIV-1 can evade CARD8-sensing when its protease remains inactive in infected cells prior to viral budding. Also acts as a negative regulator of the NLRP3 inflammasome. May also act as an inhibitor of NF-kappa-B activation. In terms of biological role, constitutes the precursor of the CARD8 inflammasome, which mediates autoproteolytic processing within the FIIND domain to generate the N-terminal and C-terminal parts, which are associated non-covalently in absence of pathogens and other damage-associated signals. Its function is as follows. Regulatory part that prevents formation of the CARD8 inflammasome: in absence of pathogens and other damage-associated signals, interacts with the C-terminal part of CARD8 (Caspase recruitment domain-containing protein 8, C-terminus), preventing activation of the CARD8 inflammasome. In response to pathogen-associated signals, this part is ubiquitinated by the N-end rule pathway and degraded by the proteasome, releasing the cleaved C-terminal part of the protein, which polymerizes and forms the CARD8 inflammasome. Constitutes the active part of the CARD8 inflammasome. In absence of pathogens and other damage-associated signals, interacts with the N-terminal part of CARD8 (Caspase recruitment domain-containing protein 8, N-terminus), preventing activation of the CARD8 inflammasome. In response to pathogen-associated signals, the N-terminal part of CARD8 is degraded by the proteasome, releasing this form, which polymerizes to form the CARD8 inflammasome complex: the CARD8 inflammasome complex then directly recruits pro-caspase-1 (proCASP1) and promotes caspase-1 (CASP1) activation, leading to gasdermin-D (GSDMD) cleavage and subsequent pyroptosis. This Homo sapiens (Human) protein is Caspase recruitment domain-containing protein 8.